Reading from the N-terminus, the 591-residue chain is Serine/threonine-protein phosphatase PP2A 65 kDa regulatory subunit (591 aa).

Alanine 2 is subject to N-acetylalanine. HEAT repeat units follow at residues 10 to 48 (DSLY…GEER), 49 to 86 (TRSE…GGPE), 87 to 125 (FAMY…SAQD), 126 to 163 (LEIH…VTQP), 164 to 202 (VKAE…ETEY), 203 to 241 (LKSD…PQDD), 242 to 280 (VEHL…GPEI), 281 to 323 (TRVD…QVQI), 324 to 362 (ILSS…GAYQ), 363 to 401 (TVEQ…GIQQ), 402 to 440 (LSQS…GQEF), 441 to 479 (FDQK…GAPW), 480 to 518 (AEQA…GTDI), 519 to 557 (TTKL…EASV), and 558 to 591 (IDAQ…IAAA).

This sequence belongs to the phosphatase 2A regulatory subunit A family. As to quaternary structure, PP2A exists in several trimeric forms, all of which consist of a core composed of a catalytic subunit associated with a 65 kDa regulatory subunit (PR65) (subunit A). The core complex associates with a third, variable subunit (subunit B), which confers distinct properties to the holoenzyme. Interacts with the inorganic phosphate transporter PXo (CG10483). Component of the Integrator-PP2A (INTAC) complex, composed of the Integrator core complex and protein phosphatase 2A subunits mts/PP2A and Pp2A-29B. Expression varies in tissues throughout development. Highly distributed expression in early embryos. In late embryonal development, found at high levels in nervous system and gonads. In third instar larvae, found in brain, imaginal disks and salivary glands.

The protein localises to the nucleus. In terms of biological role, the PR65 subunit of protein phosphatase 2A serves as a scaffolding molecule to coordinate the assembly of the catalytic subunit and a variable regulatory B subunit. Key mediator of a quality checkpoint during transcription elongation as part of the Integrator-PP2A (INTAC) complex. The INTAC complex drives premature transcription termination of transcripts that are unfavorably configured for transcriptional elongation: within the INTAC complex, acts as a scaffolding subunit for mts/PP2A, which catalyzes dephosphorylation of the C-terminal domain (CTD) of Pol II subunit POLR2A/RPB1 and Spt5, thereby preventing transcriptional elongation. The polypeptide is Serine/threonine-protein phosphatase PP2A 65 kDa regulatory subunit (Pp2A-29B) (Drosophila melanogaster (Fruit fly)).